Consider the following 393-residue polypeptide: Methylthioribose kinase (393 aa).

Residues Asn-38, Lys-53, and 107–109 contribute to the ATP site; that span reads EDL. A substrate-binding site is contributed by Asp-225. 242–244 provides a ligand contact to ATP; that stretch reads DPE. Arg-332 serves as a coordination point for substrate.

Belongs to the methylthioribose kinase family. As to quaternary structure, homodimer.

It catalyses the reaction 5-(methylsulfanyl)-D-ribose + ATP = 5-(methylsulfanyl)-alpha-D-ribose 1-phosphate + ADP + H(+). The protein operates within amino-acid biosynthesis; L-methionine biosynthesis via salvage pathway; S-methyl-5-thio-alpha-D-ribose 1-phosphate from S-methyl-5'-thioadenosine (hydrolase route): step 2/2. Functionally, catalyzes the phosphorylation of methylthioribose into methylthioribose-1-phosphate. The polypeptide is Methylthioribose kinase (Bacillus cereus (strain ZK / E33L)).